A 363-amino-acid polypeptide reads, in one-letter code: MAAARATLPLPRVPAPSPRPQLRPFPSLPARRGAVACGAGSAAAGVAASLRLGDVIEAQQFDRDALTEIFEVAREMEALERGSSSRGAGRSRVLEGYLMATLFYEPSTRTRLSFEAAMRRLGGEVLTTENAREFSSAAKGETLEDTIRTVEGYSDIIVLRHFESGAARRAAATADIPVINAGDGPGQHPTQALLDVYSIEREIGTLDGIKLGLVGDLANGRTVRSLAYLIAKYQNIKIYFVSPDVVKMKDDIKEYLTSQGVEWEESSDLLEVASKCDVIYQTRIQKERFGERIDLYEAARGKYIVDKKVLDVLPKHAVIMHPLPRLDEITIDVDSDPRAAYFRQAKNGLYIRMALLKLLLVGR.

Residues 1–21 form a disordered region; sequence MAAARATLPLPRVPAPSPRPQ. Residues 1–36 constitute a chloroplast transit peptide; the sequence is MAAARATLPLPRVPAPSPRPQLRPFPSLPARRGAVA. Positions 11-21 are enriched in pro residues; sequence PRVPAPSPRPQ. Positions 109 and 110 each coordinate carbamoyl phosphate. Positions 109 and 110 each coordinate UMP. Lysine 139 provides a ligand contact to L-aspartate. Carbamoyl phosphate contacts are provided by arginine 160, histidine 188, and glutamine 191. Residues arginine 160 and histidine 188 each contribute to the UMP site. Residues arginine 221 and arginine 283 each coordinate UMP. L-aspartate-binding residues include arginine 221 and arginine 283. 2 residues coordinate carbamoyl phosphate: leucine 323 and proline 324.

Belongs to the aspartate/ornithine carbamoyltransferase superfamily. ATCase family. As to quaternary structure, homotrimer.

The protein localises to the plastid. It is found in the chloroplast. The enzyme catalyses carbamoyl phosphate + L-aspartate = N-carbamoyl-L-aspartate + phosphate + H(+). It participates in pyrimidine metabolism; UMP biosynthesis via de novo pathway; (S)-dihydroorotate from bicarbonate: step 2/3. Its activity is regulated as follows. Feedback inhibited by UMP. Catalyzes the condensation of carbamoyl phosphate and aspartate to form carbamoyl aspartate and inorganic phosphate, the committed step in the de novo pyrimidine nucleotide biosynthesis pathway. The polypeptide is Aspartate carbamoyltransferase, chloroplastic (PYRB) (Oryza sativa subsp. japonica (Rice)).